The following is a 553-amino-acid chain: MLGMGVFKQLIKELYEWLLHSMDMATQHLVAIVLKISVVKYLIKEFHDRFIYFIDLLAQHFIIVALSGFLVLVFGVLIGVFAFYNSKARAFLLPVVNFLYTIPSLALFALFIPVIGVGLKNALLVLVLYGLLPIVYSTYNALKEVREEVIKAAIGLGCNPKELFFRVHFLLAIPQILAGLRIAVVMLVAMAGIGALIGAGGLGQAIFRGLNTQNTTLLVAGSLIIALFSVLADKFVSVFQHENALQRLFSQNATQKQKRRVYTNLAVFLFLLLASALWLIPRNAIEEKPLVVATKPSSEQYILGEILSLLLEKHHIPIKRAFGIGGGTMNIHPALIRGDFDLYMEYTGTAWVNTLKNPLTQKVDFETIKKRYEKEFNLLWVGLLGFNNTYSLAISKEDAQKYAIETFSDLALHSQNFDFGAEFDFFEREDAFKGLMKAYRFHFRSLHEMDINLRYKSFESHKINALDVFTTDAQIKELDLKVLKDDKGFFPNYQAGIVIRKEIIKKYPEALKILEKLDSKINDETMQDLNYQVEVLKKSPKIVAKDFLERLGL.

The region spanning 57–236 (LAQHFIIVAL…LFSVLADKFV (180 aa)) is the ABC transmembrane type-1 domain. The next 6 membrane-spanning stretches (helical) occupy residues 61–81 (FIIV…IGVF), 98–118 (FLYT…IGVG), 122–142 (ALLV…YNAL), 182–202 (IAVV…AGGL), 219–239 (VAGS…VSVF), and 261–281 (VYTN…WLIP). The Periplasmic segment spans residues 282–553 (RNAIEEKPLV…AKDFLERLGL (272 aa)). Residues 288–549 (KPLVVATKPS…PKIVAKDFLE (262 aa)) are ergothioneine binding domain.

This sequence in the N-terminal section; belongs to the binding-protein-dependent transport system permease family. The protein in the C-terminal section; belongs to the OsmX family. As to quaternary structure, the complex is composed of two ATP-binding proteins (EgtV) and two transmembrane proteins (EgtU).

It is found in the cell inner membrane. Its function is as follows. Part of the ABC transporter complex EgtUV involved in the uptake of ergothioneine (EGT), a natural low-molecular weight (LMW) thiol antioxidant which protects H.pylori against bleach stress. Responsible for the translocation of the substrate across the membrane. Also contains a C-terminal periplasmic solute-binding domain (SBD) which binds to ergothioneine with low-micromolar affinity. Cannot bind the structurally similar compounds glycine betaine, choline, proline, carnitine or histidine. The sequence is that of Ergothioneine transport permease/ergothioneine binding protein EgtU from Helicobacter pylori (strain G27).